The primary structure comprises 179 residues: Adenylyl-sulfate kinase (179 aa).

13 to 20 (GLSGAGKS) is a binding site for ATP. Serine 87 (phosphoserine intermediate) is an active-site residue.

The protein belongs to the APS kinase family.

The catalysed reaction is adenosine 5'-phosphosulfate + ATP = 3'-phosphoadenylyl sulfate + ADP + H(+). It participates in sulfur metabolism; hydrogen sulfide biosynthesis; sulfite from sulfate: step 2/3. Functionally, catalyzes the synthesis of activated sulfate. This chain is Adenylyl-sulfate kinase, found in Paraburkholderia xenovorans (strain LB400).